The chain runs to 310 residues: tRNA dimethylallyltransferase (310 aa).

An ATP-binding site is contributed by 14-21; it reads GPTASGKS. A substrate-binding site is contributed by 16-21; it reads TASGKS. 2 interaction with substrate tRNA regions span residues 39-42 and 163-167; these read DSMQ and QRIVR.

Belongs to the IPP transferase family. In terms of assembly, monomer. The cofactor is Mg(2+).

The catalysed reaction is adenosine(37) in tRNA + dimethylallyl diphosphate = N(6)-dimethylallyladenosine(37) in tRNA + diphosphate. Its function is as follows. Catalyzes the transfer of a dimethylallyl group onto the adenine at position 37 in tRNAs that read codons beginning with uridine, leading to the formation of N6-(dimethylallyl)adenosine (i(6)A). This Brucella abortus (strain S19) protein is tRNA dimethylallyltransferase.